Here is a 438-residue protein sequence, read N- to C-terminus: Glutamine synthetase (438 aa).

Residues 14–98 (EEVEYVDIRF…VHCNVVEPDT (85 aa)) form the GS beta-grasp domain. The 333-residue stretch at 106–438 (PRIALKAEAY…LAGDVFTKDQ (333 aa)) folds into the GS catalytic domain. Glutamate 130 and glutamate 132 together coordinate Mg(2+). Aspartate 208 contacts ATP. Glutamate 213 and glutamate 220 together coordinate Mg(2+). Residues 264 to 265 (NG) and glycine 265 contribute to the L-glutamate site. Position 269 (histidine 269) interacts with Mg(2+). ATP is bound by residues 271-273 (NMS) and serine 273. 3 residues coordinate L-glutamate: arginine 321, glutamate 327, and arginine 339. Arginine 339, arginine 344, and lysine 352 together coordinate ATP. A Mg(2+)-binding site is contributed by glutamate 357. Position 359 (arginine 359) interacts with L-glutamate. Tyrosine 397 is modified (O-AMP-tyrosine).

This sequence belongs to the glutamine synthetase family. Oligomer of 12 subunits arranged in the form of two hexameric ring. Mg(2+) serves as cofactor.

The protein resides in the cytoplasm. The enzyme catalyses L-glutamate + NH4(+) + ATP = L-glutamine + ADP + phosphate + H(+). Its activity is regulated as follows. The activity of this enzyme could be controlled by adenylation under conditions of abundant glutamine. Its function is as follows. Catalyzes the ATP-dependent biosynthesis of glutamine from glutamate and ammonia. The protein is Glutamine synthetase of Rhodobacter capsulatus (Rhodopseudomonas capsulata).